The following is a 99-amino-acid chain: Co-chaperonin GroES (99 aa).

The protein belongs to the GroES chaperonin family. Heptamer of 7 subunits arranged in a ring. Interacts with the chaperonin GroEL.

It localises to the cytoplasm. Functionally, together with the chaperonin GroEL, plays an essential role in assisting protein folding. The GroEL-GroES system forms a nano-cage that allows encapsulation of the non-native substrate proteins and provides a physical environment optimized to promote and accelerate protein folding. GroES binds to the apical surface of the GroEL ring, thereby capping the opening of the GroEL channel. The protein is Co-chaperonin GroES of Corynebacterium efficiens (strain DSM 44549 / YS-314 / AJ 12310 / JCM 11189 / NBRC 100395).